The chain runs to 248 residues: Sugar fermentation stimulation protein homolog (248 aa).

The protein belongs to the SfsA family.

In Methylorubrum extorquens (strain CM4 / NCIMB 13688) (Methylobacterium extorquens), this protein is Sugar fermentation stimulation protein homolog.